The sequence spans 285 residues: Sulfoquinovosyl glycerol transport system permease protein SmoH (285 aa).

6 consecutive transmembrane segments (helical) span residues 21–41 (FIAA…ILFT), 83–103 (FMVA…AAYA), 115–135 (ILSL…VPLF), 150–170 (LILP…VSFF), 195–215 (VVVP…FVNA), and 250–270 (PVIS…IVIF). Positions 79–270 (LFNSFMVALL…VPVAILIVIF (192 aa)) constitute an ABC transmembrane type-1 domain.

The protein belongs to the binding-protein-dependent transport system permease family. In terms of assembly, the complex is probably composed of two ATP-binding proteins (SmoE), two transmembrane proteins (SmoG and SmoH) and a solute-binding protein (SmoF).

The protein localises to the cell inner membrane. Part of the ABC transporter complex SmoEFGH involved in sulfoquinovosyl glycerol (SQGro) uptake. Responsible for the translocation of the substrate across the membrane. The sequence is that of Sulfoquinovosyl glycerol transport system permease protein SmoH from Agrobacterium fabrum (strain C58 / ATCC 33970) (Agrobacterium tumefaciens (strain C58)).